We begin with the raw amino-acid sequence, 338 residues long: Tetraacyldisaccharide 4'-kinase (338 aa).

Residue 51 to 58 participates in ATP binding; the sequence is HLGGAGKT.

Belongs to the LpxK family.

It catalyses the reaction a lipid A disaccharide + ATP = a lipid IVA + ADP + H(+). Its pathway is glycolipid biosynthesis; lipid IV(A) biosynthesis; lipid IV(A) from (3R)-3-hydroxytetradecanoyl-[acyl-carrier-protein] and UDP-N-acetyl-alpha-D-glucosamine: step 6/6. Functionally, transfers the gamma-phosphate of ATP to the 4'-position of a tetraacyldisaccharide 1-phosphate intermediate (termed DS-1-P) to form tetraacyldisaccharide 1,4'-bis-phosphate (lipid IVA). In Rhodopseudomonas palustris (strain HaA2), this protein is Tetraacyldisaccharide 4'-kinase.